The following is a 101-amino-acid chain: Vacuolar ATPase assembly integral membrane protein VMA21 (101 aa).

The Cytoplasmic segment spans residues Met1–Ser25. Residues Thr26–Phe46 traverse the membrane as a helical segment. Residues Thr47–Tyr65 lie on the Lumenal side of the membrane. The chain crosses the membrane as a helical span at residues Phe66–Val86. The Cytoplasmic portion of the chain corresponds to Ala87–Asp101.

Belongs to the VMA21 family. As to quaternary structure, associates with the V0 complex of the vacuolar ATPase (V-ATPase). Interacts with ATP6AP2.

The protein localises to the endoplasmic reticulum membrane. Its subcellular location is the endoplasmic reticulum-Golgi intermediate compartment membrane. The protein resides in the cytoplasmic vesicle. It is found in the COPII-coated vesicle membrane. Required for the assembly of the V0 complex of the vacuolar ATPase (V-ATPase) in the endoplasmic reticulum. This is Vacuolar ATPase assembly integral membrane protein VMA21 from Bos taurus (Bovine).